We begin with the raw amino-acid sequence, 89 residues long: UPF0223 protein BcerKBAB4_3787 (89 aa).

It belongs to the UPF0223 family.

The chain is UPF0223 protein BcerKBAB4_3787 from Bacillus mycoides (strain KBAB4) (Bacillus weihenstephanensis).